Consider the following 425-residue polypeptide: Serine--tRNA ligase (425 aa).

230–232 contributes to the L-serine binding site; the sequence is TAE. Residue 261–263 participates in ATP binding; that stretch reads RAE. E284 serves as a coordination point for L-serine. An ATP-binding site is contributed by 348–351; sequence EISS. Residue S384 coordinates L-serine.

The protein belongs to the class-II aminoacyl-tRNA synthetase family. Type-1 seryl-tRNA synthetase subfamily. Homodimer. The tRNA molecule binds across the dimer.

The protein localises to the cytoplasm. It carries out the reaction tRNA(Ser) + L-serine + ATP = L-seryl-tRNA(Ser) + AMP + diphosphate + H(+). The catalysed reaction is tRNA(Sec) + L-serine + ATP = L-seryl-tRNA(Sec) + AMP + diphosphate + H(+). It participates in aminoacyl-tRNA biosynthesis; selenocysteinyl-tRNA(Sec) biosynthesis; L-seryl-tRNA(Sec) from L-serine and tRNA(Sec): step 1/1. In terms of biological role, catalyzes the attachment of serine to tRNA(Ser). Is also able to aminoacylate tRNA(Sec) with serine, to form the misacylated tRNA L-seryl-tRNA(Sec), which will be further converted into selenocysteinyl-tRNA(Sec). The chain is Serine--tRNA ligase from Zymomonas mobilis subsp. mobilis (strain ATCC 31821 / ZM4 / CP4).